A 274-amino-acid chain; its full sequence is 2,3,4,5-tetrahydropyridine-2,6-dicarboxylate N-succinyltransferase (274 aa).

Substrate is bound by residues Arg106 and Asp143.

It belongs to the transferase hexapeptide repeat family. In terms of assembly, homotrimer.

The protein localises to the cytoplasm. It catalyses the reaction (S)-2,3,4,5-tetrahydrodipicolinate + succinyl-CoA + H2O = (S)-2-succinylamino-6-oxoheptanedioate + CoA. It functions in the pathway amino-acid biosynthesis; L-lysine biosynthesis via DAP pathway; LL-2,6-diaminopimelate from (S)-tetrahydrodipicolinate (succinylase route): step 1/3. The chain is 2,3,4,5-tetrahydropyridine-2,6-dicarboxylate N-succinyltransferase from Rickettsia prowazekii (strain Madrid E).